The chain runs to 719 residues: MGKMKDKDVDAEKYEKAQRSPKLCGTNYPVSIAFIVVNEFCERFSYYGMKAVLTLYFMNYLHWDKNLSTAIYHAFSGLCYFTPLLGALIADSWLGKFKTIIYLSIVYVIGHVVKSVGAIPDVGDSTVHIALSMVGLGLIALGTGGIKPCVAAFGGDQFDEDNIDERRKFFSIFYMSINAGSVLSTIITPILRGDVQCFGGDCYALAFGVPAALMVIALVVFISGSGLYKKSPPEGNVLVRVCKCIGFAISNRWTNSKKSPKRSHWLDWAEEKYSKRLIQEIKMVCRVLVLYIPLPMFWALFDQQGSRWTLQATRMNMDFGGGFIIKPDQMQMLNALLILVFIPIFDMGIYPLVGLCRIKLTPLKKMATGMILAALAFCAATAVEVYVIKTVVEPPPAKESLVQVYNLMDSDVTVQFPAHNVFSEPLKPYEEPSGYSSLPLTGESQLQNVVVSHNGMNYQCRLTFTERMAYSLLLHPTAQHNGSVCNLVKDHITKSETGAAYIRFINTHTENINVTVGTEEVHASANYGISRNISVPRGEYNKAVCVTDTKEYEINLGLLDFGAFYTVILSEAGNNLAVKKMEDIQANNIHIGWQIPQYVFLTAGEVMFSITGLEFSYSQAPASMKSVLQAGWLMTVAFGNVIVLIVAEGAGMEQWVEFLLFAALLVAVSIIFSIMAYFYTYVDPDQLDKLFKEDGDGGKVESSKKDELSLGDMPKQTKM.

The Cytoplasmic segment spans residues 1-43 (MGKMKDKDVDAEKYEKAQRSPKLCGTNYPVSIAFIVVNEFCER). Residues 44-61 (FSYYGMKAVLTLYFMNYL) form a helical membrane-spanning segment. The Extracellular portion of the chain corresponds to 62–69 (HWDKNLST). N-linked (GlcNAc...) asparagine glycosylation is present at Asn66. Residues 70 to 90 (AIYHAFSGLCYFTPLLGALIA) form a helical membrane-spanning segment. The Cytoplasmic portion of the chain corresponds to 91-99 (DSWLGKFKT). A helical transmembrane segment spans residues 100–120 (IIYLSIVYVIGHVVKSVGAIP). The Extracellular segment spans residues 121 to 125 (DVGDS). The chain crosses the membrane as a helical span at residues 126–146 (TVHIALSMVGLGLIALGTGGI). The Cytoplasmic portion of the chain corresponds to 147–169 (KPCVAAFGGDQFDEDNIDERRKF). Residues 170-190 (FSIFYMSINAGSVLSTIITPI) traverse the membrane as a helical segment. The Extracellular portion of the chain corresponds to 191–201 (LRGDVQCFGGD). A helical membrane pass occupies residues 202–222 (CYALAFGVPAALMVIALVVFI). Residues 223-280 (SGSGLYKKSPPEGNVLVRVCKCIGFAISNRWTNSKKSPKRSHWLDWAEEKYSKRLIQE) lie on the Cytoplasmic side of the membrane. The chain crosses the membrane as a helical span at residues 281–301 (IKMVCRVLVLYIPLPMFWALF). Topologically, residues 302 to 334 (DQQGSRWTLQATRMNMDFGGGFIIKPDQMQMLN) are extracellular. A helical transmembrane segment spans residues 335–355 (ALLILVFIPIFDMGIYPLVGL). The Cytoplasmic segment spans residues 356–367 (CRIKLTPLKKMA). A helical transmembrane segment spans residues 368–388 (TGMILAALAFCAATAVEVYVI). Residues 389 to 594 (KTVVEPPPAK…QANNIHIGWQ (206 aa)) lie on the Extracellular side of the membrane. Residues 389–594 (KTVVEPPPAK…QANNIHIGWQ (206 aa)) form an extracellular domain (ECD) region. N-linked (GlcNAc...) asparagine glycans are attached at residues Asn481, Asn513, and Asn532. A helical membrane pass occupies residues 595-615 (IPQYVFLTAGEVMFSITGLEF). At 616–626 (SYSQAPASMKS) the chain is on the cytoplasmic side. The chain crosses the membrane as a helical span at residues 627-647 (VLQAGWLMTVAFGNVIVLIVA). The Extracellular segment spans residues 648–657 (EGAGMEQWVE). A helical membrane pass occupies residues 658-678 (FLLFAALLVAVSIIFSIMAYF). At 679 to 719 (YTYVDPDQLDKLFKEDGDGGKVESSKKDELSLGDMPKQTKM) the chain is on the cytoplasmic side. Basic and acidic residues predominate over residues 695 to 708 (GDGGKVESSKKDEL). The interval 695–719 (GDGGKVESSKKDELSLGDMPKQTKM) is disordered.

This sequence belongs to the major facilitator superfamily. Proton-dependent oligopeptide transporter (POT/PTR) (TC 2.A.17) family. Expressed in kidney, brain and gut. Also expressed weakly in eye, gill and skeletal muscle.

The protein resides in the apical cell membrane. The protein localises to the cytoplasmic vesicle. Its subcellular location is the phagosome membrane. It localises to the cell membrane. The enzyme catalyses a dipeptide(out) + 2 H(+)(out) = a dipeptide(in) + 2 H(+)(in). It catalyses the reaction N-acetyl-D-muramoyl-L-alanyl-D-isoglutamine(out) + 3 H(+)(out) = N-acetyl-D-muramoyl-L-alanyl-D-isoglutamine(in) + 3 H(+)(in). It carries out the reaction glycyl-L-leucine(out) + 2 H(+)(out) = glycyl-L-leucine(in) + 2 H(+)(in). The catalysed reaction is glycyl-L-lysine(out) + 2 H(+)(out) = glycyl-L-lysine(in) + 2 H(+)(in). The enzyme catalyses glycyl-L-glutamate(out) + 3 H(+)(out) = glycyl-L-glutamate(in) + 3 H(+)(in). It catalyses the reaction L-alanyl-L-alanine(out) + 2 H(+)(out) = L-alanyl-L-alanine(in) + 2 H(+)(in). It carries out the reaction an L-amino acid tripeptide(out) + 2 H(+)(out) = an L-amino acid tripeptide(in) + 2 H(+)(in). The catalysed reaction is carnosine(out) + 2 H(+)(out) = carnosine(in) + 2 H(+)(in). In terms of biological role, proton-coupled amino-acid transporter that transports oligopeptides of 2 to 4 amino acids with a preference for dipeptides. Transports neutral and anionic dipeptides with a proton to peptide stoichiometry of 2:1 or 3:1. This is Solute carrier family 15 member 2 from Danio rerio (Zebrafish).